The sequence spans 89 residues: Signal recognition particle 19 kDa protein (89 aa).

Belongs to the SRP19 family. In terms of assembly, part of the signal recognition particle protein translocation system, which is composed of SRP and FtsY. Archaeal SRP consists of a 7S RNA molecule of 300 nucleotides and two protein subunits: SRP54 and SRP19.

It is found in the cytoplasm. In terms of biological role, involved in targeting and insertion of nascent membrane proteins into the cytoplasmic membrane. Binds directly to 7S RNA and mediates binding of the 54 kDa subunit of the SRP. The chain is Signal recognition particle 19 kDa protein from Methanococcus maripaludis (strain DSM 14266 / JCM 13030 / NBRC 101832 / S2 / LL).